A 239-amino-acid chain; its full sequence is Guanylate kinase (239 aa).

The Guanylate kinase-like domain maps to 55-235; sequence GRIFVITGPS…TLAELQAILL (181 aa). 62–69 is a binding site for ATP; sequence GPSGVGKS.

Belongs to the guanylate kinase family.

It is found in the cytoplasm. It catalyses the reaction GMP + ATP = GDP + ADP. In terms of biological role, essential for recycling GMP and indirectly, cGMP. The protein is Guanylate kinase (gmk) of Mycoplasma pneumoniae (strain ATCC 29342 / M129 / Subtype 1) (Mycoplasmoides pneumoniae).